Reading from the N-terminus, the 206-residue chain is Heterochromatin protein 1 (206 aa).

Disordered stretches follow at residues 1 to 24 and 47 to 145; these read MGKKIDNPESSAKVSDAEEEEEEY and GYPE…GFDR. A phosphoserine mark is found at Ser11 and Ser15. In terms of domain architecture, Chromo 1 spans 24–82; sequence YAVEKIIDRRVRKGKVEYYLKWKGYPETENTWEPENNLDCQDLIQQYEASRKDEEKSAA. A compositionally biased stretch (low complexity) spans 50 to 60; it reads ETENTWEPENN. Positions 72–98 are enriched in basic and acidic residues; sequence ASRKDEEKSAASKKDRPSSSAKAKETQ. Residues 95 to 206 form a binds to Su(var)39 region; sequence KETQGRASSS…RLSWYSDNED (112 aa). Phosphoserine is present on residues Ser102, Ser103, and Ser113. Phosphothreonine is present on residues Thr127, Thr128, and Thr134. A Chromo 2 domain is found at 147–205; sequence LEAEKILGASDNNGRLTFLIQFKGVDQAEMVPSSVANEKIPRMVIHFYEERLSWYSDNE.

In terms of assembly, homodimer. Probably associates with Su(var)3-9. Interacts with Mcm10. Interacts (via chromoshadow domain) with piwi (via N-terminal region). Interacts with Rrp6. Associates with and may be part of the HipHop-HOAP telomere capping complex but is not required for its stability or telomere localization. Interacts (via the chromo domain 2 (chromoshadow domain) and the hinge region between chromo domains 1 and 2) with cav/HOAP (via C-terminus); the interaction is direct. Each molecule of cav/HOAP interacts with 2 molecules of Su(var)205/HP1. Interacts with HipHop (via N-terminus). Interacts with moi/modigliani; the interaction is direct. Interacts (via chromo domain 1) with His3/histone 3 (via N-terminal tail methylated at 'Lys-10'); the interaction is direct. In terms of tissue distribution, salivary gland (at protein level).

Its subcellular location is the nucleus. It is found in the nucleoplasm. The protein resides in the chromosome. It localises to the telomere. Its function is as follows. Structural component of heterochromatin, involved in gene repression and the modification of position-effect-variegation. Recognizes and binds histone H3 tails methylated at 'Lys-9', leading to epigenetic repression. Stabilizes chromatin-associated RNAs probably by binding to them and thereby preventing their degradation. Associates with, and may be a part of, the HipHop-HOAP complex that recruits the MTV complex to form the terminin telomere-capping complex, which binds to chromosome ends in a sequence-independent manner and prevents telomere fusion. Telomere capping is independent of the origin recognition complex (ORC). This Drosophila melanogaster (Fruit fly) protein is Heterochromatin protein 1.